The chain runs to 122 residues: Large ribosomal subunit protein uL14 (122 aa).

The protein belongs to the universal ribosomal protein uL14 family. As to quaternary structure, part of the 50S ribosomal subunit. Forms a cluster with proteins L3 and L19. In the 70S ribosome, L14 and L19 interact and together make contacts with the 16S rRNA in bridges B5 and B8.

Binds to 23S rRNA. Forms part of two intersubunit bridges in the 70S ribosome. This chain is Large ribosomal subunit protein uL14, found in Lactobacillus helveticus (strain DPC 4571).